The chain runs to 570 residues: MMQKLIAQIEKGKPFFEKLSRNIYLRAIRDGFISAMPVILFSSIFLLIAYVPNIFGFKWDKGMEAILMKPYNYTMGLVAFLVAGTTAKSLTDSFNRKLESTNQINFISTMLAAMCGFLFLASDPAKDGGFLSAFMGTKGLLTAFLSAFVTVIVYNFCVKRNITIKMPKEVPPNISQVFKDLIPFSAVIIILYALDLVIRNSFKSNVAEGILKLFEPLFTAADGWIGVTIIFGAFALFWFVGIHGPSIVEPAIAAITYANIEANFKLLQAGEHADKIITSGTQMFIVTFGGTGATLVVPFMFMWMTKSKRNKAIGRASVVPTFFGVNEPILFGAPLVLNPVFFIPFVLAPIVNVWIFKLFVEVLGINSFSVNLPWTTPGPLGIIMGTGFGLWSFVLAITLIVVDIIIYYPFLKVYDSEILDEEEGRKESNSDLKEKVAANFDTKKADSILAASGVSDDAAKASNITEQTNVLVLCAGGGTSGLLANALNKAAEEYHVPVKAAAGGYGAHMDIMKEYQLIILAPQVASNYEDIKQDTDRLGIKLAKTQGAEYIKLTRDGQAALDFVQQQFEN.

A PTS EIIC type-3 domain is found at 9-410; that stretch reads IEKGKPFFEK…VVDIIIYYPF (402 aa). A run of 9 helical transmembrane segments spans residues 31 to 51, 65 to 85, 104 to 124, 133 to 153, 178 to 198, 223 to 243, 283 to 303, 340 to 360, and 382 to 402; these read GFISAMPVILFSSIFLLIAYV, AILMKPYNYTMGLVAFLVAGT, INFISTMLAAMCGFLFLASDP, AFMGTKGLLTAFLSAFVTVIV, FKDLIPFSAVIIILYALDLVI, GWIGVTIIFGAFALFWFVGIH, MFIVTFGGTGATLVVPFMFMW, VFFIPFVLAPIVNVWIFKLFV, and IIMGTGFGLWSFVLAITLIVV. Residues 467 to 570 form the PTS EIIB type-3 domain; the sequence is QTNVLVLCAG…LDFVQQQFEN (104 aa). Cysteine 474 functions as the Phosphocysteine intermediate; for EIIB activity in the catalytic mechanism. Cysteine 474 bears the Phosphocysteine; by EIIA mark.

The protein localises to the cell membrane. The catalysed reaction is lactose(out) + N(pros)-phospho-L-histidyl-[protein] = lactose 6-phosphate(in) + L-histidyl-[protein]. The phosphoenolpyruvate-dependent sugar phosphotransferase system (sugar PTS), a major carbohydrate active transport system, catalyzes the phosphorylation of incoming sugar substrates concomitantly with their translocation across the cell membrane. The enzyme II LacEF PTS system is involved in lactose transport. The sequence is that of PTS system lactose-specific EIICB component from Staphylococcus aureus (strain N315).